A 396-amino-acid chain; its full sequence is Inositol hexakisphosphate kinase 3 (396 aa).

206 to 214 (PCILDLKMG) is a substrate binding site.

It belongs to the inositol phosphokinase (IPK) family. Highly expressed in cerebellum, brain cortex, kidney, thymus and lung. Detected at lower levels in hippocampus, testis, heart and olfactory bulb.

It localises to the cytoplasm. It carries out the reaction 1D-myo-inositol hexakisphosphate + ATP = 5-diphospho-1D-myo-inositol 1,2,3,4,6-pentakisphosphate + ADP. The catalysed reaction is 1-diphospho-1D-myo-inositol 2,3,4,5,6-pentakisphosphate + ATP + H(+) = 1,5-bis(diphospho)-1D-myo-inositol 2,3,4,6-tetrakisphosphate + ADP. Functionally, converts inositol hexakisphosphate (InsP6) to diphosphoinositol pentakisphosphate (InsP7/PP-InsP5). Converts 1,3,4,5,6-pentakisphosphate (InsP5) to PP-InsP4. The polypeptide is Inositol hexakisphosphate kinase 3 (Ip6k3) (Mus musculus (Mouse)).